The chain runs to 377 residues: Chaperone protein DnaJ 1 (377 aa).

Positions 4 to 68 constitute a J domain; that stretch reads DYYQTLGVTR…EIRQRYDQFG (65 aa). The CR-type zinc-finger motif lies at 136 to 218; that stretch reads GGEKEIRIPH…CNGVGRKQET (83 aa). Residues Cys-149, Cys-152, Cys-166, Cys-169, Cys-192, Cys-195, Cys-206, and Cys-209 each coordinate Zn(2+). CXXCXGXG motif repeat units follow at residues 149 to 156, 166 to 173, 192 to 199, and 206 to 213; these read CQVCEGTG, CGTCNGAG, CPTCNGSG, and CEACNGVG.

Belongs to the DnaJ family. Homodimer. The cofactor is Zn(2+).

Its subcellular location is the cytoplasm. Its function is as follows. Participates actively in the response to hyperosmotic and heat shock by preventing the aggregation of stress-denatured proteins and by disaggregating proteins, also in an autonomous, DnaK-independent fashion. Unfolded proteins bind initially to DnaJ; upon interaction with the DnaJ-bound protein, DnaK hydrolyzes its bound ATP, resulting in the formation of a stable complex. GrpE releases ADP from DnaK; ATP binding to DnaK triggers the release of the substrate protein, thus completing the reaction cycle. Several rounds of ATP-dependent interactions between DnaJ, DnaK and GrpE are required for fully efficient folding. Also involved, together with DnaK and GrpE, in the DNA replication of plasmids through activation of initiation proteins. In Synechocystis sp. (strain ATCC 27184 / PCC 6803 / Kazusa), this protein is Chaperone protein DnaJ 1.